A 308-amino-acid polypeptide reads, in one-letter code: Oxygen-dependent coproporphyrinogen-III oxidase (308 aa).

Serine 100 is a binding site for substrate. 2 residues coordinate a divalent metal cation: histidine 104 and histidine 114. Histidine 114 functions as the Proton donor in the catalytic mechanism. 116 to 118 (NFR) contacts substrate. A divalent metal cation contacts are provided by histidine 153 and histidine 183. The important for dimerization stretch occupies residues 248-283 (YVEFNLVFDRGTIFGLQSGGRTESILSSMPPMATWK). 266–268 (GGR) contacts substrate.

Belongs to the aerobic coproporphyrinogen-III oxidase family. In terms of assembly, homodimer. A divalent metal cation is required as a cofactor.

Its subcellular location is the cytoplasm. It carries out the reaction coproporphyrinogen III + O2 + 2 H(+) = protoporphyrinogen IX + 2 CO2 + 2 H2O. The protein operates within porphyrin-containing compound metabolism; protoporphyrin-IX biosynthesis; protoporphyrinogen-IX from coproporphyrinogen-III (O2 route): step 1/1. Its function is as follows. Involved in the heme biosynthesis. Catalyzes the aerobic oxidative decarboxylation of propionate groups of rings A and B of coproporphyrinogen-III to yield the vinyl groups in protoporphyrinogen-IX. The sequence is that of Oxygen-dependent coproporphyrinogen-III oxidase from Francisella philomiragia subsp. philomiragia (strain ATCC 25017 / CCUG 19701 / FSC 153 / O#319-036).